Consider the following 421-residue polypeptide: Gamma-glutamyl phosphate reductase (421 aa).

The protein belongs to the gamma-glutamyl phosphate reductase family.

The protein localises to the cytoplasm. The enzyme catalyses L-glutamate 5-semialdehyde + phosphate + NADP(+) = L-glutamyl 5-phosphate + NADPH + H(+). It functions in the pathway amino-acid biosynthesis; L-proline biosynthesis; L-glutamate 5-semialdehyde from L-glutamate: step 2/2. In terms of biological role, catalyzes the NADPH-dependent reduction of L-glutamate 5-phosphate into L-glutamate 5-semialdehyde and phosphate. The product spontaneously undergoes cyclization to form 1-pyrroline-5-carboxylate. The protein is Gamma-glutamyl phosphate reductase of Pseudomonas aeruginosa (strain ATCC 15692 / DSM 22644 / CIP 104116 / JCM 14847 / LMG 12228 / 1C / PRS 101 / PAO1).